We begin with the raw amino-acid sequence, 59 residues long: UPF0434 protein HEAR2489 (59 aa).

Belongs to the UPF0434 family.

This Herminiimonas arsenicoxydans protein is UPF0434 protein HEAR2489.